Here is a 530-residue protein sequence, read N- to C-terminus: Purine-cytosine permease FCY22 (530 aa).

Phosphothreonine is present on Thr-46. 12 consecutive transmembrane segments (helical) span residues 96-116 (MVIV…LNFG), 119-139 (VLVI…FSLF), 162-182 (FFSL…ISVS), 197-217 (CPIW…TFFG), 220-240 (VVHA…LVII), 263-283 (GVLS…TYAA), 298-318 (IFFS…ILGA), 345-365 (AILV…LLAL), 372-392 (VPGM…LAKI), 396-416 (VWTM…TYYF), 418-438 (GFME…IAIA), and 463-483 (LPIG…VALG).

It belongs to the purine-cytosine permease (2.A.39) family.

The protein resides in the membrane. Its function is as follows. Probable purine-cytosine permease. In Saccharomyces cerevisiae (strain ATCC 204508 / S288c) (Baker's yeast), this protein is Purine-cytosine permease FCY22 (FCY22).